We begin with the raw amino-acid sequence, 276 residues long: Small ribosomal subunit protein uS5w (276 aa).

A compositionally biased stretch (basic and acidic residues) spans 1-15; sequence MAERGVERGGDRGDF. The interval 1-42 is disordered; that stretch reads MAERGVERGGDRGDFGRGFGGRGGGRGGPRGRGRRAGRAPEE. A compositionally biased stretch (gly residues) spans 16 to 28; sequence GRGFGGRGGGRGG. Residues 87-150 form the S5 DRBM domain; it reads LKDEVMKIMP…ILAKLSVVPI (64 aa).

This sequence belongs to the universal ribosomal protein uS5 family.

The chain is Small ribosomal subunit protein uS5w (RPS2D) from Arabidopsis thaliana (Mouse-ear cress).